A 299-amino-acid chain; its full sequence is Porphobilinogen deaminase (299 aa).

Cys-234 carries the post-translational modification S-(dipyrrolylmethanemethyl)cysteine.

The protein belongs to the HMBS family. Monomer. Dipyrromethane is required as a cofactor.

It carries out the reaction 4 porphobilinogen + H2O = hydroxymethylbilane + 4 NH4(+). The protein operates within porphyrin-containing compound metabolism; protoporphyrin-IX biosynthesis; coproporphyrinogen-III from 5-aminolevulinate: step 2/4. Its function is as follows. Tetrapolymerization of the monopyrrole PBG into the hydroxymethylbilane pre-uroporphyrinogen in several discrete steps. The sequence is that of Porphobilinogen deaminase from Corynebacterium efficiens (strain DSM 44549 / YS-314 / AJ 12310 / JCM 11189 / NBRC 100395).